A 498-amino-acid polypeptide reads, in one-letter code: Zinc finger protein 682 (498 aa).

Positions 4–75 (LTFRDVTIEF…KRHETIAKPP (72 aa)) constitute a KRAB domain. 10 C2H2-type zinc fingers span residues 173–195 (FKCM…KIIH), 201–223 (CICE…KRIH), 229–251 (YKCE…KRIH), 257–279 (YKCE…KKIH), 285–307 (YTCE…KTIH), 313–335 (YKCK…ERTH), 341–363 (YKCE…KVIH), 369–391 (YKCE…KRIH), 397–419 (YKCE…KRIH), and 425–447 (YNCE…KKIH). A C2H2-type 11; degenerate zinc finger spans residues 453–475 (YKCEECGKAFKRCSHLNEHKRVQ).

Belongs to the krueppel C2H2-type zinc-finger protein family.

It localises to the nucleus. Its function is as follows. May be involved in transcriptional regulation. This Homo sapiens (Human) protein is Zinc finger protein 682 (ZNF682).